The following is an 89-amino-acid chain: Large ribosomal subunit protein bL31B (89 aa).

Belongs to the bacterial ribosomal protein bL31 family. Type B subfamily. Part of the 50S ribosomal subunit.

The chain is Large ribosomal subunit protein bL31B from Corynebacterium urealyticum (strain ATCC 43042 / DSM 7109).